The primary structure comprises 452 residues: Phosphoglucosamine mutase (452 aa).

The active-site Phosphoserine intermediate is the Ser-112. Positions 112, 251, 253, and 255 each coordinate Mg(2+). Ser-112 carries the phosphoserine modification.

It belongs to the phosphohexose mutase family. Requires Mg(2+) as cofactor. In terms of processing, activated by phosphorylation.

It catalyses the reaction alpha-D-glucosamine 1-phosphate = D-glucosamine 6-phosphate. Catalyzes the conversion of glucosamine-6-phosphate to glucosamine-1-phosphate. The chain is Phosphoglucosamine mutase from Bordetella pertussis (strain Tohama I / ATCC BAA-589 / NCTC 13251).